We begin with the raw amino-acid sequence, 268 residues long: MRRIDSCFAELRANGRKALIPFITAGDPSLEATVPVMHALVRAGADVIELGVPFSDPMADGPTIQRSSERALGRGAGLAYVLEAVHEFRREDATTPVVLMGYLNPIEIHGTRRFAEAAVAAGVDGVLLVDLPPEEAGETRAIFTEVGLALIALASPTTSEQRLDMLCSTAQGYLYYVSFAGVTGASNLLDTHAASDRLRQLRQRAGAPVVAGFGIKDAASAAAMAVDADGVVVGSALVAALADAGEVRSARERAEAFLAPLRQALDQK.

Active-site proton acceptor residues include E49 and D60.

It belongs to the TrpA family. Tetramer of two alpha and two beta chains.

The catalysed reaction is (1S,2R)-1-C-(indol-3-yl)glycerol 3-phosphate + L-serine = D-glyceraldehyde 3-phosphate + L-tryptophan + H2O. It participates in amino-acid biosynthesis; L-tryptophan biosynthesis; L-tryptophan from chorismate: step 5/5. Its function is as follows. The alpha subunit is responsible for the aldol cleavage of indoleglycerol phosphate to indole and glyceraldehyde 3-phosphate. The polypeptide is Tryptophan synthase alpha chain (Xanthomonas euvesicatoria pv. vesicatoria (strain 85-10) (Xanthomonas campestris pv. vesicatoria)).